The following is a 489-amino-acid chain: MPPGGGGPMKDCEYSQISTHSSSPMESPHKKKKIAARRKWEVFPGRNKFFCNGRIMMARQTGVFYLTLILILVTSGLFFAFDCRYLAEKITPAIPVVGGILFFFVMGTLLRTSFSDPGVLPRATPDEAADLERQIDIANGTSSGGYRPPPRTKEVVINGQTVKLKYCFTCKIFRPPRASHCSLCDNCVEQFDHHCPWVGNCVGKRNYRFFYMFILSLSFLTVFIFAFVITHVIHRSQQKGFLDALKDSPASVLEAVICFFSVWSIIGLSGFHTYLISSNQTTNEDIKGSWSNKRGKENYNPYSYGNIFTNCCVALCGPISPSLIDRRGYVQPDTPQPAAPSNGITMYGATQSQSDMCDQDQCIQSTKFVLQAAATPLLQSEPSLTSEELHMPGKPGLGTPCASLTLGQPTPPSSMPNLATEATLSDIMPLKDEHGGHQFLTPDEAPSPPRMLGAGSPLAHSRTMHMLGLASQDSLHEDSVRGLVKLSSV.

Residues Met1–Gln60 lie on the Cytoplasmic side of the membrane. Residues Thr61 to Phe81 form a helical membrane-spanning segment. Residues Asp82–Lys89 lie on the Lumenal side of the membrane. A helical transmembrane segment spans residues Ile90–Leu110. The Cytoplasmic portion of the chain corresponds to Arg111 to Arg208. The DHHC domain maps to Lys165–Leu215. The active-site S-palmitoyl cysteine intermediate is the Cys195. Residues Phe209–Ile229 traverse the membrane as a helical segment. At Thr230–Ala255 the chain is on the lumenal side. The chain crosses the membrane as a helical span at residues Val256–Ile276. Over Ser277–Val489 the chain is Cytoplasmic. Positions His434–Ala454 are disordered. Ser456 is modified (phosphoserine).

It belongs to the DHHC palmitoyltransferase family. ERF2/ZDHHC9 subfamily.

The protein localises to the endoplasmic reticulum membrane. Its subcellular location is the golgi apparatus membrane. It catalyses the reaction L-cysteinyl-[protein] + hexadecanoyl-CoA = S-hexadecanoyl-L-cysteinyl-[protein] + CoA. In terms of biological role, palmitoyltransferase that could catalyze the addition of palmitate onto various protein substrates. May have a palmitoyltransferase activity toward the beta-2 adrenergic receptor/ADRB2 and thereby regulate G protein-coupled receptor signaling. May play a role in cell differentiation and apoptosis. This is Palmitoyltransferase ZDHHC14 from Mus musculus (Mouse).